A 350-amino-acid chain; its full sequence is Protein-glutamate methylesterase/protein-glutamine glutaminase (350 aa).

The 118-residue stretch at 5-122 folds into the Response regulatory domain; the sequence is KVLCVDDSAL…RDGLIEYSEV (118 aa). D56 bears the 4-aspartylphosphate mark. The CheB-type methylesterase domain occupies 152–346; it reads PFASSEKLVI…ERILTRLGDR (195 aa). Active-site residues include S165, H191, and D288.

This sequence belongs to the CheB family. In terms of processing, phosphorylated by CheA. Phosphorylation of the N-terminal regulatory domain activates the methylesterase activity.

Its subcellular location is the cytoplasm. It catalyses the reaction [protein]-L-glutamate 5-O-methyl ester + H2O = L-glutamyl-[protein] + methanol + H(+). It carries out the reaction L-glutaminyl-[protein] + H2O = L-glutamyl-[protein] + NH4(+). In terms of biological role, involved in chemotaxis. Part of a chemotaxis signal transduction system that modulates chemotaxis in response to various stimuli. Catalyzes the demethylation of specific methylglutamate residues introduced into the chemoreceptors (methyl-accepting chemotaxis proteins or MCP) by CheR. Also mediates the irreversible deamidation of specific glutamine residues to glutamic acid. This chain is Protein-glutamate methylesterase/protein-glutamine glutaminase, found in Bordetella pertussis (strain Tohama I / ATCC BAA-589 / NCTC 13251).